A 111-amino-acid chain; its full sequence is Ferredoxin-thioredoxin reductase, catalytic chain (111 aa).

C52 contacts [4Fe-4S] cluster. C54 serves as the catalytic Nucleophile. The cysteines at positions 54 and 84 are disulfide-linked. Positions 71, 73, and 82 each coordinate [4Fe-4S] cluster.

This sequence belongs to the ferredoxin thioredoxin reductase beta subunit family. Heterodimer of subunit A (variable subunit) and subunit B (catalytic subunit). Heterodimeric FTR forms a complex with ferredoxin and thioredoxin. [4Fe-4S] cluster is required as a cofactor.

Its subcellular location is the plastid. It is found in the chloroplast. It carries out the reaction [thioredoxin]-disulfide + 2 reduced [2Fe-2S]-[ferredoxin] + 2 H(+) = [thioredoxin]-dithiol + 2 oxidized [2Fe-2S]-[ferredoxin]. Its function is as follows. Catalytic subunit of the ferredoxin-thioredoxin reductase (FTR), which catalyzes the two-electron reduction of thioredoxins by the electrons provided by reduced ferredoxin. The sequence is that of Ferredoxin-thioredoxin reductase, catalytic chain (ftrB) from Cyanidium caldarium (Red alga).